The primary structure comprises 92 residues: Defensin alpha 4 (92 aa).

An N-terminal signal peptide occupies residues 1 to 19 (MKTLVLLSALVLLAFQVQA). The propeptide occupies 20-58 (DPIQNTDEETKTEEQPGEEDQAVSISFGGQEGSALHEKS). The interval 23-42 (QNTDEETKTEEQPGEEDQAV) is disordered. 3 cysteine pairs are disulfide-bonded: cysteine 64–cysteine 89, cysteine 66–cysteine 81, and cysteine 71–cysteine 88.

It belongs to the alpha-defensin family. In terms of tissue distribution, paneth cells of the small bowel.

It localises to the secreted. It is found in the cytoplasmic vesicle. The protein resides in the secretory vesicle. In terms of biological role, host-defense peptide that has antimicrobial activity. Exhibits activity against Gram-negative E.coli (in vitro). Probably contributes to the antimicrobial barrier function of the small bowel mucosa. This Mus musculus (Mouse) protein is Defensin alpha 4.